We begin with the raw amino-acid sequence, 196 residues long: Corticoliberin (196 aa).

An N-terminal signal peptide occupies residues 1-24 (MRLPLLLSAGVLLVVSLPCPPCRA). A propeptide spanning residues 25 to 153 (LLSRGPIPGA…RQETPERERR (129 aa)) is cleaved from the precursor. The segment at 122-158 (PRRQLDSPAGPAERGEENALGSRQETPERERRSEEPP) is disordered. Over residues 146–156 (ETPERERRSEE) the composition is skewed to basic and acidic residues. Ile194 carries the post-translational modification Isoleucine amide.

It belongs to the sauvagine/corticotropin-releasing factor/urotensin I family. In terms of assembly, interacts (via C-terminus) with CRFR1 (via N-terminal extracellular domain). In terms of tissue distribution, produced by the hypothalamus.

The protein localises to the secreted. Its function is as follows. Hormone regulating the release of corticotropin from pituitary gland. Induces NLRP6 in intestinal epithelial cells, hence may influence gut microbiota profile. This chain is Corticoliberin (CRH), found in Canis lupus familiaris (Dog).